Here is a 580-residue protein sequence, read N- to C-terminus: Zinc finger CCCH domain-containing protein 47 (580 aa).

ANK repeat units lie at residues 72 to 102 and 107 to 139; these read EERT…DVNR and ERVT…LVNS. 2 C3H1-type zinc fingers span residues 251–278 and 286–310; these read PYTC…HGVF and QYKT…HKRE. The interval 421-451 is disordered; sequence YVSSPSRNSQMGQNMNQHYPSSPVRQPPSQH.

Expressed in roots and anthers.

It is found in the nucleus. Its function is as follows. Involved in salt stress response. May positively modulate plant tolerance to salt stress. The sequence is that of Zinc finger CCCH domain-containing protein 47 from Arabidopsis thaliana (Mouse-ear cress).